Consider the following 82-residue polypeptide: ATP synthase subunit c (82 aa).

2 helical membrane passes run 18–38 and 61–81; these read LGEA…IGKI and IIAA…CGFL.

This sequence belongs to the ATPase C chain family. F-type ATPases have 2 components, F(1) - the catalytic core - and F(0) - the membrane proton channel. F(1) has five subunits: alpha(3), beta(3), gamma(1), delta(1), epsilon(1). F(0) has three main subunits: a(1), b(2) and c(10-14). The alpha and beta chains form an alternating ring which encloses part of the gamma chain. F(1) is attached to F(0) by a central stalk formed by the gamma and epsilon chains, while a peripheral stalk is formed by the delta and b chains.

The protein resides in the cell inner membrane. Its function is as follows. F(1)F(0) ATP synthase produces ATP from ADP in the presence of a proton or sodium gradient. F-type ATPases consist of two structural domains, F(1) containing the extramembraneous catalytic core and F(0) containing the membrane proton channel, linked together by a central stalk and a peripheral stalk. During catalysis, ATP synthesis in the catalytic domain of F(1) is coupled via a rotary mechanism of the central stalk subunits to proton translocation. Key component of the F(0) channel; it plays a direct role in translocation across the membrane. A homomeric c-ring of between 10-14 subunits forms the central stalk rotor element with the F(1) delta and epsilon subunits. This Azobacteroides pseudotrichonymphae genomovar. CFP2 protein is ATP synthase subunit c.